A 139-amino-acid chain; its full sequence is ATP synthase epsilon chain (139 aa).

The protein belongs to the ATPase epsilon chain family. As to quaternary structure, F-type ATPases have 2 components, CF(1) - the catalytic core - and CF(0) - the membrane proton channel. CF(1) has five subunits: alpha(3), beta(3), gamma(1), delta(1), epsilon(1). CF(0) has three main subunits: a, b and c.

The protein resides in the cell membrane. Produces ATP from ADP in the presence of a proton gradient across the membrane. The polypeptide is ATP synthase epsilon chain (Levilactobacillus brevis (strain ATCC 367 / BCRC 12310 / CIP 105137 / JCM 1170 / LMG 11437 / NCIMB 947 / NCTC 947) (Lactobacillus brevis)).